We begin with the raw amino-acid sequence, 254 residues long: Nickel import ATP-binding protein NikD (254 aa).

Residues 2–241 enclose the ABC transporter domain; it reads PQQIELRNIA…PKHAVTRSLV (240 aa). 36 to 43 provides a ligand contact to ATP; that stretch reads GGSGSGKS.

Belongs to the ABC transporter superfamily. Nickel importer (TC 3.A.1.5.3) family. In terms of assembly, the complex is composed of two ATP-binding proteins (NikD and NikE), two transmembrane proteins (NikB and NikC) and a solute-binding protein (NikA).

Its subcellular location is the cell inner membrane. It carries out the reaction Ni(2+)(out) + ATP + H2O = Ni(2+)(in) + ADP + phosphate + H(+). Its function is as follows. Part of the ABC transporter complex NikABCDE involved in nickel import. Responsible for energy coupling to the transport system. This is Nickel import ATP-binding protein NikD from Shigella sonnei (strain Ss046).